The following is a 256-amino-acid chain: Cytokine-inducible SH2-containing protein (256 aa).

An SH2 domain is found at W81–Y162. A disordered region spans residues A168 to A190. Residues K207–Q255 enclose the SOCS box domain.

In terms of assembly, stably associated with the tyrosine-phosphorylated IL3 receptor beta chain and tyrosine-phosphorylated EPO receptor (EPOR).

It functions in the pathway protein modification; protein ubiquitination. Its function is as follows. SOCS family proteins form part of a classical negative feedback system that regulates cytokine signal transduction. CIS is involved in the negative regulation of cytokines that signal through the JAK-STAT5 pathway such as erythropoietin, prolactin and interleukin 3 (IL3) receptor. Inhibits STAT5 trans-activation by suppressing its tyrosine phosphorylation. May be a substrate recognition component of a SCF-like ECS (Elongin BC-CUL2/5-SOCS-box protein) E3 ubiquitin-protein ligase complex which mediates the ubiquitination and subsequent proteasomal degradation of target proteins. In Rattus norvegicus (Rat), this protein is Cytokine-inducible SH2-containing protein (Cish).